Here is a 50-residue protein sequence, read N- to C-terminus: Thrombin-like enzyme BpirSP41 (50 aa).

The region spanning 1–50 is the Peptidase S1 domain; that stretch reads VVGGDECDINEHPFLAFLYSHGYFCGLTLINQEWVLTAAHCDRRFMRIYL. The cysteines at positions 25 and 41 are disulfide-linked. Residue histidine 40 is the Charge relay system of the active site.

It belongs to the peptidase S1 family. Snake venom subfamily. As to quaternary structure, monomer. N-glycosylated. In terms of tissue distribution, expressed by the venom gland.

Its subcellular location is the secreted. With respect to regulation, inhibited by serine protease inhibitors PMSF, benzamidine, leupeptin and aprotinin, as well as by copper ions (Cu2+). Not inhibited by metalloprotease inhibitors EDTA, EGTA and 1,10-phenanthroline, as well as by barium (Ba2+) and calcium ion (Ca2+). Its function is as follows. Snake venom serine protease that interferes with the hemostatic system of the prey. It almost completely degrades both Aalpha (FGA) and Bbeta (FGB) chains of fibrinogen. It presents a higher ability to degrade fibrin clots than BpirSP27. It hydrolyzes chromogenic substrates S-2238 (used for testing thrombin activity), S-2222 (factor Xa), S-2266 (glandular kallikrein and factor XIa), and S-2302 (plasma kallikrein, factor XIa and XIIa). It shows a decrease in the clotting time of human plasma in the presence of increasing doses of the enzyme. Its minimum coagulant dose (MCD) is 20 ug. It promotes platelet aggregation with a maximum of aggregation of 20%, regardless of the concentration increase or the presence of calcium. It also shows 40% inhibition of the hemolytic activity promoted by the complement pathways and possess only a minor role in the induction of edema and pain in rat. This Bothrops pirajai (Piraja's lancehead) protein is Thrombin-like enzyme BpirSP41.